The primary structure comprises 531 residues: Protein RPN4 (531 aa).

Residues Arg338–Gly432 form a disordered region. Residues Ser341–Thr354 show a composition bias toward polar residues. Over residues Ser362–Asn375 the composition is skewed to low complexity. Residues Lys382 to Leu398 carry the Nuclear localization signal motif. Positions Ser394–Ser407 are enriched in basic residues. The span at Ser408–Ser430 shows a compositional bias: low complexity.

As to quaternary structure, probably interacts with SEC63. Interacts with MUB1, UBR2 and RPN2. Post-translationally, ubiquitinated by UBR2 in the presence of UBC2; which leads to proteasomal degradation.

Its subcellular location is the nucleus. Functionally, acts as a transcriptional activator of a number of genes encoding proteasomal subunits. Binds to a PACE (proteasome-associated control element) DNA sequence 5'-GGTGGCAAA-3'. Its expression is in turn regulated by the 26S proteasome, thereby providing a negative feedback control mechanism. Required for normal growth at low temperatures. The protein is Protein RPN4 (RPN4) of Saccharomyces cerevisiae (strain ATCC 204508 / S288c) (Baker's yeast).